The chain runs to 72 residues: Crustacean hyperglycemic hormone B (72 aa).

Gln1 carries the post-translational modification Pyrrolidone carboxylic acid. Phe3 bears the D-phenylalanine; in form CHHB-II mark. 3 disulfides stabilise this stretch: Cys7–Cys43, Cys23–Cys39, and Cys26–Cys52. The residue at position 72 (Val72) is a Valine amide.

In terms of processing, stereoinversion of L-Phe (in CHHB-I) to D-Phe (in CHHB-II).

Its subcellular location is the secreted. In terms of biological role, hormone found in the sinus gland of isopods and decapods which controls the blood sugar level. Has a secretagogue action over the amylase released from the midgut gland. May act as a stress hormone and may be involved in the control of molting and reproduction. This Cherax destructor (Common yabby crayfish) protein is Crustacean hyperglycemic hormone B.